The sequence spans 154 residues: Ribosome maturation factor RimP (154 aa).

Belongs to the RimP family.

The protein localises to the cytoplasm. Functionally, required for maturation of 30S ribosomal subunits. The chain is Ribosome maturation factor RimP from Finegoldia magna (strain ATCC 29328 / DSM 20472 / WAL 2508) (Peptostreptococcus magnus).